We begin with the raw amino-acid sequence, 111 residues long: Nucleoid-associated protein LBA0378 (111 aa).

It belongs to the YbaB/EbfC family. As to quaternary structure, homodimer.

Its subcellular location is the cytoplasm. The protein localises to the nucleoid. Functionally, binds to DNA and alters its conformation. May be involved in regulation of gene expression, nucleoid organization and DNA protection. The chain is Nucleoid-associated protein LBA0378 from Lactobacillus acidophilus (strain ATCC 700396 / NCK56 / N2 / NCFM).